Consider the following 502-residue polypeptide: Maturase K (502 aa).

The protein belongs to the intron maturase 2 family. MatK subfamily.

The protein localises to the plastid. Its subcellular location is the chloroplast. Its function is as follows. Usually encoded in the trnK tRNA gene intron. Probably assists in splicing its own and other chloroplast group II introns. In Theobroma cacao (Cacao), this protein is Maturase K.